The primary structure comprises 1045 residues: Mitotic deacetylase-associated SANT domain protein (1045 aa).

At methionine 1 the chain carries N-acetylmethionine. Disordered regions lie at residues methionine 1–serine 68 and asparagine 99–tyrosine 159. The segment covering serine 132–lysine 146 has biased composition (polar residues). Residue lysine 166 forms a Glycyl lysine isopeptide (Lys-Gly) (interchain with G-Cter in SUMO2) linkage. An Asymmetric dimethylarginine modification is found at arginine 193. 5 disordered regions span residues glutamine 228–alanine 264, serine 276–serine 305, alanine 330–leucine 349, histidine 378–alanine 397, and leucine 410–aspartate 441. The span at valine 240 to alanine 264 shows a compositional bias: low complexity. Residues aspartate 412–alanine 425 show a composition bias toward basic and acidic residues. Arginine 447 carries the omega-N-methylarginine modification. Position 461 is a phosphoserine (serine 461). The interval glutamine 543–proline 563 is disordered. Over residues glutamate 549–proline 563 the composition is skewed to basic and acidic residues. A Glycyl lysine isopeptide (Lys-Gly) (interchain with G-Cter in SUMO1); alternate cross-link involves residue lysine 590. Lysine 590 participates in a covalent cross-link: Glycyl lysine isopeptide (Lys-Gly) (interchain with G-Cter in SUMO2); alternate. Threonine 655 bears the Phosphothreonine mark. The residue at position 661 (serine 661) is a Phosphoserine. Threonine 704 carries the phosphothreonine modification. Serine 709 is subject to Phosphoserine. Threonine 715 is modified (phosphothreonine). Residues proline 721 to lysine 813 enclose the ELM2 domain. One can recognise an SANT domain in the interval threonine 828–lysine 879. Residues threonine 887–arginine 1045 are disordered. 2 stretches are compositionally biased toward basic and acidic residues: residues serine 894–threonine 909 and proline 919–glycine 942. Serine 923 carries the phosphoserine modification. A compositionally biased stretch (acidic residues) spans glutamate 943–glutamate 957. The span at alanine 970–alanine 980 shows a compositional bias: polar residues.

Interacts with DNTTIP1. Identified in a histone deacetylase complex that contains DNTTIP1, HDAC1 and MIDEAS; this complex assembles into a tetramer that contains four copies of each protein chain.

Its subcellular location is the nucleus. The protein is Mitotic deacetylase-associated SANT domain protein of Homo sapiens (Human).